We begin with the raw amino-acid sequence, 162 residues long: UPF0460 protein y4vQ (162 aa).

It belongs to the UPF0460 family.

The protein is UPF0460 protein y4vQ of Sinorhizobium fredii (strain NBRC 101917 / NGR234).